The following is a 320-amino-acid chain: Sliding-clamp-loader large subunit (320 aa).

Residues 12 to 15 (EQKY), Ile-24, 53 to 58 (GTGKTT), and Arg-205 each bind ATP.

It belongs to the Tevenvirinae sliding-clamp-loader large subunit family. The sliding-clamp-loader consists of 4 large subunits and 1 small subunit. Interacts with the sliding clamp; this interaction allows the sliding-clamp-loader to open the sliding clamp. Part of the replicase complex that includes the DNA polymerase, the polymerase clamp, the clamp loader complex, the single-stranded DNA binding protein, the primase, the helicase and the helicase assembly factor.

Forms the sliding-clamp-loader together with the small subunit. Functions as an ATPase enzyme. The clamp loader holds the clamp in an open conformation and places it onto the DNA. 4 ATP molecules must bind to the sliding-clamp-loader before the latter can open the sliding clamp. ATP hydrolysis triggers the detachment of the sliding clamp from the sliding-clamp-loader, freeing the sliding clamp to track along DNA. The polypeptide is Sliding-clamp-loader large subunit (44) (Escherichia phage RB69 (Bacteriophage RB69)).